Here is a 359-residue protein sequence, read N- to C-terminus: Putative transposase y4uE (359 aa).

2 disordered regions span residues 1–31 (MGDG…APGG) and 318–359 (HYAH…EEAA).

It belongs to the transposase 9 family.

This is Putative transposase y4uE from Sinorhizobium fredii (strain NBRC 101917 / NGR234).